The primary structure comprises 235 residues: Serine/arginine-rich splicing factor 7 (235 aa).

The region spanning 11 to 84 (TKVYVGNLGT…SRVRVELSTG (74 aa)) is the RRM domain. At Lys24 the chain carries N6-acetyllysine; alternate. Residue Lys24 forms a Glycyl lysine isopeptide (Lys-Gly) (interchain with G-Cter in SUMO2); alternate linkage. Residue Ser32 is modified to Phosphoserine. The tract at residues 81–98 (LSTGMPRRSRFDRPPARR) is sufficient for interaction with NXF1. The CCHC-type zinc finger occupies 104–120 (DRCYECGEKGHYAYDCH). Over residues 123–180 (SRRRRSRSRSRSHSRSRGRRYSRSRSRSRGRRSRSASPRRSRSVSLRRSRSASLRRSR) the composition is skewed to basic residues. Residues 123–235 (SRRRRSRSRS…RRSASPERVD (113 aa)) form a disordered region. 4 repeat units span residues 153–160 (RRSRSASP), 161–168 (RRSRSVSL), 169–176 (RRSRSASL), and 177–184 (RRSRSGSI). The interval 153 to 223 (RRSRSASPRR…SPKRSRSPSG (71 aa)) is 6 X 8 AA repeats of R-R-S-R-S-X-S-X. Phosphoserine is present on residues Ser163, Ser165, and Ser167. Residues Ser181, Ser183, Ser189, Ser191, and Ser193 each carry the phosphoserine modification. Residues 187–219 (SRSRSRSRSRSRSLSRPRSSRSKSRSPSPKRSR) are compositionally biased toward basic residues. Residues 208–215 (SKSRSPSP) form a 5; approximate repeat. A 6; approximate repeat occupies 216 to 223 (KRSRSPSG). A phosphoserine mark is found at Ser228 and Ser230.

Belongs to the splicing factor SR family. In terms of assembly, found in large molecular weight complexes containing CCNL1 and the p110 isoforms of either CDC2L1 or CDC2L2. Interacts with CCNL2 and CPSF6. Interacts with NXF1. Interacts with YTHDC1. Extensively phosphorylated on serine residues in the RS domain.

Its subcellular location is the nucleus. The protein resides in the cytoplasm. Functionally, required for pre-mRNA splicing. Represses the splicing of MAPT/Tau exon 10. May function as export adapter involved in mRNA nuclear export such as of histone H2A. Binds mRNA which is thought to be transferred to the NXF1-NXT1 heterodimer for export (TAP/NXF1 pathway); enhances NXF1-NXT1 RNA-binding activity. RNA-binding is semi-sequence specific. The polypeptide is Serine/arginine-rich splicing factor 7 (SRSF7) (Bos taurus (Bovine)).